Consider the following 195-residue polypeptide: HTH-type transcriptional regulator BetI (195 aa).

The HTH tetR-type domain occupies 8–68 (SIRRRQLIDA…ATMRDITSQL (61 aa)). A DNA-binding region (H-T-H motif) is located at residues 31-50 (TIAQIARRAGVSTGIISHYF).

It participates in amine and polyamine biosynthesis; betaine biosynthesis via choline pathway [regulation]. Repressor involved in the biosynthesis of the osmoprotectant glycine betaine. It represses transcription of the choline transporter BetT and the genes of BetAB involved in the synthesis of glycine betaine. This Escherichia coli (strain K12 / DH10B) protein is HTH-type transcriptional regulator BetI.